Consider the following 429-residue polypeptide: ATP-sensitive inward rectifier potassium channel 12 (429 aa).

Topologically, residues M1–D76 are cytoplasmic. Residues I77–L103 traverse the membrane as a helical segment. 2 residues coordinate a 1,2-diacyl-sn-glycero-3-phospho-(1D-myo-inositol-4,5-bisphosphate): R78 and R80. The Extracellular portion of the chain corresponds to I104–G129. C123 and C155 form a disulfide bridge. Positions F130–Y146 form an intramembrane region, helical; Pore-forming. Residues T143, I144, G145, and Y146 each contribute to the K(+) site. A Selectivity filter motif is present at residues T143–F148. At G147–C155 the chain is on the extracellular side. The helical transmembrane segment at P156–K183 threads the bilayer. 2 residues coordinate a 1,2-diacyl-sn-glycero-3-phospho-(1D-myo-inositol-4,5-bisphosphate): K183 and K188. The Cytoplasmic portion of the chain corresponds to M184 to I429. The disordered stretch occupies residues R386 to H407. The segment covering S395–H407 has biased composition (basic and acidic residues).

This sequence belongs to the inward rectifier-type potassium channel family. Homotetramer.

Its subcellular location is the membrane. The protein resides in the cell membrane. It localises to the sarcolemma. It is found in the T-tubule. The enzyme catalyses K(+)(in) = K(+)(out). With respect to regulation, activated by phosphatidylinositol 4,5-bisphosphate (PtdIns(4,5)P2). PtdIns(4,5)P2 binding to the cytoplasmic side of the channel triggers a conformation change leading to channel opening. Functionally, inward rectifying potassium channel that probably participates in controlling the resting membrane potential in electrically excitable cells. Probably participates in establishing action potential waveform and excitability of neuronal and muscle tissues. Inward rectifier potassium channels are characterized by a greater tendency to allow potassium to flow into the cell rather than out of it. Their voltage dependence is regulated by the concentration of extracellular potassium; as external potassium is raised, the voltage range of the channel opening shifts to more positive voltages. The inward rectification is mainly due to the blockage of outward current by internal magnesium. The protein is ATP-sensitive inward rectifier potassium channel 12 (KCNJ12) of Gallus gallus (Chicken).